We begin with the raw amino-acid sequence, 66 residues long: Repressor protein C4 (66 aa).

Repressor of the ant/reb gene. The sequence is that of Repressor protein C4 (C4) from Escherichia phage P1 (Bacteriophage P1).